Here is a 420-residue protein sequence, read N- to C-terminus: Serine hydroxymethyltransferase (420 aa).

Residues L121 and G125–L127 contribute to the (6S)-5,6,7,8-tetrahydrofolate site. The residue at position 230 (K230) is an N6-(pyridoxal phosphate)lysine. (6S)-5,6,7,8-tetrahydrofolate is bound by residues E246 and S354 to F356.

Belongs to the SHMT family. As to quaternary structure, homodimer. It depends on pyridoxal 5'-phosphate as a cofactor.

It is found in the cytoplasm. It carries out the reaction (6R)-5,10-methylene-5,6,7,8-tetrahydrofolate + glycine + H2O = (6S)-5,6,7,8-tetrahydrofolate + L-serine. Its pathway is one-carbon metabolism; tetrahydrofolate interconversion. The protein operates within amino-acid biosynthesis; glycine biosynthesis; glycine from L-serine: step 1/1. Catalyzes the reversible interconversion of serine and glycine with tetrahydrofolate (THF) serving as the one-carbon carrier. This reaction serves as the major source of one-carbon groups required for the biosynthesis of purines, thymidylate, methionine, and other important biomolecules. Also exhibits THF-independent aldolase activity toward beta-hydroxyamino acids, producing glycine and aldehydes, via a retro-aldol mechanism. The sequence is that of Serine hydroxymethyltransferase from Rickettsia massiliae (strain Mtu5).